The chain runs to 513 residues: Glucose-1-phosphate adenylyltransferase small subunit, chloroplastic/amyloplastic (513 aa).

A chloroplast-targeting transit peptide spans 1–64 (MAMAAAASPS…RRPFFFSPRA (64 aa)).

It belongs to the bacterial/plant glucose-1-phosphate adenylyltransferase family. As to quaternary structure, heterotetramer. In terms of tissue distribution, leaves and starchy endosperm.

Its subcellular location is the plastid. It is found in the chloroplast. The protein resides in the amyloplast. The catalysed reaction is alpha-D-glucose 1-phosphate + ATP + H(+) = ADP-alpha-D-glucose + diphosphate. It functions in the pathway glycan biosynthesis; starch biosynthesis. Its activity is regulated as follows. Activated by 3'phosphoglycerate, inhibited by orthophosphate. Allosteric regulation. Its function is as follows. This protein plays a role in synthesis of starch. It catalyzes the synthesis of the activated glycosyl donor, ADP-glucose from Glc-1-P and ATP. The sequence is that of Glucose-1-phosphate adenylyltransferase small subunit, chloroplastic/amyloplastic from Hordeum vulgare (Barley).